Here is a 315-residue protein sequence, read N- to C-terminus: Voltage-dependent calcium channel gamma-3 subunit (315 aa).

The next 4 helical transmembrane spans lie at 8-28 (VQMLITTVGAFAAFSLMTIAV), 104-124 (SSVFPILSVTLLFFGGLCVAA), 135-155 (ILSAGIFFVSAGLSNIIGIIV), and 181-201 (FGAFSFIIAEIVGVVAVHIYI). Residues 232–252 (RRRSSSRSTEPRSRDLSPISK) are disordered. Serine 248 carries the phosphoserine modification.

Belongs to the PMP-22/EMP/MP20 family. CACNG subfamily. In terms of assembly, the L-type calcium channel is composed of five subunits: alpha-1, alpha-2/delta, beta and gamma. Acts as an auxiliary subunit for AMPA-selective glutamate receptors (AMPARs). Found in a complex with GRIA1, GRIA2, GRIA3, GRIA4, CNIH2, CNIH3, CACNG2, CACNG4, CACNG5, CACNG7 and CACNG8. Interacts with AP4M1 and GRIA1; associates GRIA1 with the adaptor protein complex 4 (AP-4) to target GRIA1 to the somatodendritic compartment of neurons.

It is found in the membrane. Regulates the trafficking and gating properties of AMPA-selective glutamate receptors (AMPARs). Promotes their targeting to the cell membrane and synapses and modulates their gating properties by slowing their rates of activation, deactivation and desensitization. Does not show subunit-specific AMPA receptor regulation and regulates all AMPAR subunits. Thought to stabilize the calcium channel in an inactivated (closed) state. The chain is Voltage-dependent calcium channel gamma-3 subunit (CACNG3) from Bos taurus (Bovine).